The following is a 34-amino-acid chain: SCASRCKGHCRARRCGYYVSVLYRGRCYCKCLRC.

4 cysteine pairs are disulfide-bonded: Cys-2/Cys-27, Cys-6/Cys-29, Cys-10/Cys-31, and Cys-15/Cys-34.

It localises to the secreted. In terms of biological role, has antibacterial and antiviral activity. This is Mytilin-B from Mytilus edulis (Blue mussel).